A 156-amino-acid polypeptide reads, in one-letter code: Small ribosomal subunit protein uS7 (156 aa).

This sequence belongs to the universal ribosomal protein uS7 family. Part of the 30S ribosomal subunit. Contacts proteins S9 and S11.

Functionally, one of the primary rRNA binding proteins, it binds directly to 16S rRNA where it nucleates assembly of the head domain of the 30S subunit. Is located at the subunit interface close to the decoding center, probably blocks exit of the E-site tRNA. In Neisseria gonorrhoeae (strain ATCC 700825 / FA 1090), this protein is Small ribosomal subunit protein uS7.